Here is a 250-residue protein sequence, read N- to C-terminus: MTVDPIHQFEIQRYVELLRVSGVTVSFTNSAAFMVGIVALIFFFLTYATRGRTLVPGRMQSVAEMGYEFIAKMVRESAGTEGMVFFPLVFSLFVFVFVANVIGLVPYTFTITAHIVVTAALALLVIGTVVIYGFYKHGTHFLHLFVPSGVPAFLLPFIVLIEVISFLSRPISLSLRLFANMLAGHIALKVFAFFVVGLGSAGFLGWLGATLPFFMIVALTALELLVAILQAYVFAVLTSIYLNDAVHPGH.

A run of 6 helical transmembrane segments spans residues V25 to L45, V84 to L104, I115 to Y135, F141 to I161, A187 to A209, and E223 to N243.

It belongs to the ATPase A chain family. As to quaternary structure, F-type ATPases have 2 components, CF(1) - the catalytic core - and CF(0) - the membrane proton channel. CF(1) has five subunits: alpha(3), beta(3), gamma(1), delta(1), epsilon(1). CF(0) has three main subunits: a(1), b(2) and c(9-12). The alpha and beta chains form an alternating ring which encloses part of the gamma chain. CF(1) is attached to CF(0) by a central stalk formed by the gamma and epsilon chains, while a peripheral stalk is formed by the delta and b chains.

The protein resides in the cell inner membrane. Its function is as follows. Key component of the proton channel; it plays a direct role in the translocation of protons across the membrane. This chain is ATP synthase subunit a, found in Azorhizobium caulinodans (strain ATCC 43989 / DSM 5975 / JCM 20966 / LMG 6465 / NBRC 14845 / NCIMB 13405 / ORS 571).